The following is a 116-amino-acid chain: Aspartate 1-decarboxylase (116 aa).

Serine 25 acts as the Schiff-base intermediate with substrate; via pyruvic acid in catalysis. Serine 25 bears the Pyruvic acid (Ser) mark. Threonine 57 is a binding site for substrate. The active-site Proton donor is tyrosine 58. 73-75 (GAA) is a substrate binding site.

Belongs to the PanD family. Heterooctamer of four alpha and four beta subunits. Pyruvate serves as cofactor. Is synthesized initially as an inactive proenzyme, which is activated by self-cleavage at a specific serine bond to produce a beta-subunit with a hydroxyl group at its C-terminus and an alpha-subunit with a pyruvoyl group at its N-terminus.

The protein localises to the cytoplasm. It catalyses the reaction L-aspartate + H(+) = beta-alanine + CO2. It functions in the pathway cofactor biosynthesis; (R)-pantothenate biosynthesis; beta-alanine from L-aspartate: step 1/1. Functionally, catalyzes the pyruvoyl-dependent decarboxylation of aspartate to produce beta-alanine. The polypeptide is Aspartate 1-decarboxylase (Leptospira borgpetersenii serovar Hardjo-bovis (strain JB197)).